A 48-amino-acid polypeptide reads, in one-letter code: Large ribosomal subunit protein bL34c (48 aa).

The protein belongs to the bacterial ribosomal protein bL34 family.

It is found in the plastid. It localises to the chloroplast. The sequence is that of Large ribosomal subunit protein bL34c from Thalassiosira pseudonana (Marine diatom).